Consider the following 1915-residue polypeptide: Ankyrin repeat domain-containing protein 36A (1915 aa).

ANK repeat units follow at residues 31–60 (YHLK…DANK), 64–93 (KERT…ELNL), 97–126 (EDRT…NPNI), 130–159 (FGRT…NIEE), 163–192 (CEYQ…NVNA), and 196–225 (LGRS…DVLS). 5 disordered regions span residues 261–331 (PINS…DEQK), 470–619 (ATGQ…QKQS), 639–663 (MGGG…DKTD), 676–1203 (LQCG…KATS), and 1285–1304 (KDVQ…SEGE). Polar residues-rich tracts occupy residues 262–272 (INSNPVSSQKQ) and 297–306 (KSGTVSSQKQ). A compositionally biased stretch (low complexity) spans 505–521 (SLTSSEESSERPPLSTL). Composition is skewed to basic and acidic residues over residues 551–562 (PAEKATSDDKDS) and 585–596 (PAEKATSDEKDS). Polar residues-rich tracts occupy residues 597-619 (VSNI…QKQS) and 645-657 (GTVS…ASKA). Basic and acidic residues-rich tracts occupy residues 806-815 (RENKDGEKSR), 874-883 (RENKDGEKSR), 931-951 (SDEK…EISR), 976-985 (RENKDGEKSR), 1044-1053 (RENKDGEKSR), 1100-1121 (TSDE…EKSR), and 1134-1152 (ICDK…KDEQ). The span at 1175 to 1196 (VSNIPTEIKDGQQSGTVSSQKQ) shows a compositional bias: polar residues. Coiled-coil stretches lie at residues 1383 to 1466 (IKLK…TEEQ), 1504 to 1531 (KEDL…IKNQ), 1573 to 1614 (LAAL…ARCD), and 1727 to 1814 (NMLL…KRDD). The tract at residues 1489–1508 (KTGGNNSNQVSETDEKEDLL) is disordered.

This sequence belongs to the ANKRD36 family.

The sequence is that of Ankyrin repeat domain-containing protein 36A (ANKRD36) from Homo sapiens (Human).